Reading from the N-terminus, the 358-residue chain is Photosystem II protein D1 2 (358 aa).

The next 3 helical transmembrane spans lie at 28 to 45 (YVGW…AATI), 117 to 132 (HFLI…QWEL), and 141 to 155 (WICV…AAMV). Histidine 117 contacts chlorophyll a. Tyrosine 125 serves as a coordination point for pheophytin a. [CaMn4O5] cluster contacts are provided by aspartate 169 and glutamate 188. The chain crosses the membrane as a helical span at residues 196–217 (FHMLGVAGVFGGSLFSAMHGSL). Histidine 197 is a chlorophyll a binding site. Residues histidine 214 and 263–264 (SF) each bind a quinone. Histidine 214 is a binding site for Fe cation. Residue histidine 271 coordinates Fe cation. A helical transmembrane segment spans residues 273–287 (FLAAWPVVGIWFTSM). [CaMn4O5] cluster is bound by residues histidine 331, glutamate 332, aspartate 341, and alanine 343. The propeptide occupies 344–358 (TTESAPVALQAPAVG).

This sequence belongs to the reaction center PufL/M/PsbA/D family. As to quaternary structure, PSII is composed of 1 copy each of membrane proteins PsbA, PsbB, PsbC, PsbD, PsbE, PsbF, PsbH, PsbI, PsbJ, PsbK, PsbL, PsbM, PsbT, PsbX, PsbY, PsbZ, Psb30/Ycf12, peripheral proteins PsbO, CyanoQ (PsbQ), PsbU, PsbV and a large number of cofactors. It forms dimeric complexes. It depends on The D1/D2 heterodimer binds P680, chlorophylls that are the primary electron donor of PSII, and subsequent electron acceptors. It shares a non-heme iron and each subunit binds pheophytin, quinone, additional chlorophylls, carotenoids and lipids. D1 provides most of the ligands for the Mn4-Ca-O5 cluster of the oxygen-evolving complex (OEC). There is also a Cl(-1) ion associated with D1 and D2, which is required for oxygen evolution. The PSII complex binds additional chlorophylls, carotenoids and specific lipids. as a cofactor. Tyr-160 forms a radical intermediate that is referred to as redox-active TyrZ, YZ or Y-Z. Post-translationally, C-terminally processed by CtpA; processing is essential to allow assembly of the oxygen-evolving complex and thus photosynthetic growth.

The protein localises to the cellular thylakoid membrane. It carries out the reaction 2 a plastoquinone + 4 hnu + 2 H2O = 2 a plastoquinol + O2. Its function is as follows. Photosystem II (PSII) is a light-driven water:plastoquinone oxidoreductase that uses light energy to abstract electrons from H(2)O, generating O(2) and a proton gradient subsequently used for ATP formation. It consists of a core antenna complex that captures photons, and an electron transfer chain that converts photonic excitation into a charge separation. The D1/D2 (PsbA/PsbD) reaction center heterodimer binds P680, the primary electron donor of PSII as well as several subsequent electron acceptors. This Synechococcus sp. (strain RCC307) protein is Photosystem II protein D1 2.